A 236-amino-acid polypeptide reads, in one-letter code: Large ribosomal subunit protein uL2 (236 aa).

The interval 198-236 is disordered; sequence DHPFGGGGRQHPGRPKTVSRGTPPGRKVGSIAARRTGKR.

It belongs to the universal ribosomal protein uL2 family. In terms of assembly, part of the 50S ribosomal subunit. Forms a bridge to the 30S subunit in the 70S ribosome.

Functionally, one of the primary rRNA binding proteins. Required for association of the 30S and 50S subunits to form the 70S ribosome, for tRNA binding and peptide bond formation. It has been suggested to have peptidyltransferase activity; this is somewhat controversial. Makes several contacts with the 16S rRNA in the 70S ribosome. The chain is Large ribosomal subunit protein uL2 from Methanothrix thermoacetophila (strain DSM 6194 / JCM 14653 / NBRC 101360 / PT) (Methanosaeta thermophila).